Reading from the N-terminus, the 348-residue chain is Putative olfactory receptor 3A4 (348 aa).

The Extracellular portion of the chain corresponds to 1-28 (MDLGNSGNDSVVTKFVLLGLTETAALQP). N-linked (GlcNAc...) asparagine glycosylation is present at asparagine 8. Residues 29 to 52 (ILFVIFLLAYVTTIGGTLSILAAI) traverse the membrane as a helical segment. Topologically, residues 53-60 (LMETKLHS) are cytoplasmic. A helical membrane pass occupies residues 61–82 (PMYFFLGNLSLPDVGCVSVTVP). Residues 83–103 (AMLSHFISNDRSIPYKACLSE) are Extracellular-facing. A disulfide bridge connects residues cysteine 100 and cysteine 192. The chain crosses the membrane as a helical span at residues 104–123 (LFFFHLLAGADCFLLTIMAY). Topologically, residues 124–143 (DRYLAICQSLTYSSRMSWGI) are cytoplasmic. Residues 144–161 (QQALVGMSCVFSFTNALT) traverse the membrane as a helical segment. Over 162–199 (QTVALSPLNFCGPNVINHFYCDLPQPFQLSCSSVHLNG) the chain is Extracellular. Residues 200-222 (QLLFVAAAFMGVAPLVLITVSYA) traverse the membrane as a helical segment. At 223–239 (HVAAAVLRIRSAEGRKK) the chain is on the cytoplasmic side. The chain crosses the membrane as a helical span at residues 240 to 262 (AFSTCSSHLTVVGIFYGTGVFSY). Residues 263–275 (TRLGSVESSDKDK) lie on the Extracellular side of the membrane. The helical transmembrane segment at 276 to 295 (GIGILNTVISPMLNPLIYWT) threads the bilayer. The Cytoplasmic segment spans residues 296 to 348 (SLLDVGCISHCSSDAGVSPGPPVQSSLCCLQFTALLSPPPGWGGLSPLNSHGL).

Belongs to the G-protein coupled receptor 1 family.

Its subcellular location is the cell membrane. Functionally, odorant receptor. This Homo sapiens (Human) protein is Putative olfactory receptor 3A4 (OR3A4P).